We begin with the raw amino-acid sequence, 341 residues long: 3-dehydroquinate synthase (341 aa).

NAD(+)-binding positions include 54–59, 88–92, 112–113, Lys125, Lys133, and 151–154; these read DGEKYK, GVVTD, TT, and TLST. Zn(2+) is bound by residues Glu166, His220, and His236.

Belongs to the sugar phosphate cyclases superfamily. Dehydroquinate synthase family. Requires NAD(+) as cofactor. Co(2+) serves as cofactor. Zn(2+) is required as a cofactor.

The protein localises to the cytoplasm. The enzyme catalyses 7-phospho-2-dehydro-3-deoxy-D-arabino-heptonate = 3-dehydroquinate + phosphate. Its pathway is metabolic intermediate biosynthesis; chorismate biosynthesis; chorismate from D-erythrose 4-phosphate and phosphoenolpyruvate: step 2/7. In terms of biological role, catalyzes the conversion of 3-deoxy-D-arabino-heptulosonate 7-phosphate (DAHP) to dehydroquinate (DHQ). In Thermococcus kodakarensis (strain ATCC BAA-918 / JCM 12380 / KOD1) (Pyrococcus kodakaraensis (strain KOD1)), this protein is 3-dehydroquinate synthase.